The following is a 784-amino-acid chain: Endonuclease MutS2 (784 aa).

ATP is bound at residue 335–342; the sequence is GPNTGGKT. The region spanning 709–784 is the Smr domain; it reads LDLRGERYED…GTGVTIVELK (76 aa).

This sequence belongs to the DNA mismatch repair MutS family. MutS2 subfamily. Homodimer. Binds to stalled ribosomes, contacting rRNA.

Endonuclease that is involved in the suppression of homologous recombination and thus may have a key role in the control of bacterial genetic diversity. Functionally, acts as a ribosome collision sensor, splitting the ribosome into its 2 subunits. Detects stalled/collided 70S ribosomes which it binds and splits by an ATP-hydrolysis driven conformational change. Acts upstream of the ribosome quality control system (RQC), a ribosome-associated complex that mediates the extraction of incompletely synthesized nascent chains from stalled ribosomes and their subsequent degradation. Probably generates substrates for RQC. In Geobacillus sp. (strain WCH70), this protein is Endonuclease MutS2.